A 388-amino-acid polypeptide reads, in one-letter code: Succinate--CoA ligase [ADP-forming] subunit beta (388 aa).

The region spanning 9–244 is the ATP-grasp domain; it reads KQLFARYGLP…QSQEDPREAQ (236 aa). ATP contacts are provided by residues K46, 53–55, E99, T102, and E107; that span reads GRG. Mg(2+) is bound by residues N199 and D213. Residues N264 and 321 to 323 each bind substrate; that span reads GIV.

This sequence belongs to the succinate/malate CoA ligase beta subunit family. Heterotetramer of two alpha and two beta subunits. It depends on Mg(2+) as a cofactor.

It carries out the reaction succinate + ATP + CoA = succinyl-CoA + ADP + phosphate. The enzyme catalyses GTP + succinate + CoA = succinyl-CoA + GDP + phosphate. The protein operates within carbohydrate metabolism; tricarboxylic acid cycle; succinate from succinyl-CoA (ligase route): step 1/1. Succinyl-CoA synthetase functions in the citric acid cycle (TCA), coupling the hydrolysis of succinyl-CoA to the synthesis of either ATP or GTP and thus represents the only step of substrate-level phosphorylation in the TCA. The beta subunit provides nucleotide specificity of the enzyme and binds the substrate succinate, while the binding sites for coenzyme A and phosphate are found in the alpha subunit. This is Succinate--CoA ligase [ADP-forming] subunit beta from Escherichia coli O139:H28 (strain E24377A / ETEC).